The following is a 451-amino-acid chain: uncharacterized protein (451 aa).

11 helical membrane passes run 13 to 33, 41 to 61, 97 to 117, 142 to 162, 174 to 194, 217 to 237, 255 to 275, 299 to 319, 345 to 365, 381 to 401, and 429 to 449; these read IGFV…WKFP, GGAF…PLLV, ACFL…LYIV, NPVQ…LVVA, AVMM…SLTL, ILFA…VMVT, IVLM…PAVF, LPFG…AALT, WTSG…YGVL, FTVS…FIPL, and LLRF…IGIL.

The protein belongs to the sodium:neurotransmitter symporter (SNF) (TC 2.A.22) family.

It localises to the cell membrane. Its function is as follows. Putative sodium-dependent transporter. This is an uncharacterized protein from Bacillus subtilis (strain 168).